Reading from the N-terminus, the 440-residue chain is Thymidine phosphorylase (440 aa).

Belongs to the thymidine/pyrimidine-nucleoside phosphorylase family. As to quaternary structure, homodimer.

It carries out the reaction thymidine + phosphate = 2-deoxy-alpha-D-ribose 1-phosphate + thymine. Its pathway is pyrimidine metabolism; dTMP biosynthesis via salvage pathway; dTMP from thymine: step 1/2. Its function is as follows. The enzymes which catalyze the reversible phosphorolysis of pyrimidine nucleosides are involved in the degradation of these compounds and in their utilization as carbon and energy sources, or in the rescue of pyrimidine bases for nucleotide synthesis. In Yersinia pestis, this protein is Thymidine phosphorylase.